The following is a 382-amino-acid chain: Dual-specificity RNA methyltransferase RlmN (382 aa).

Glu-96 acts as the Proton acceptor in catalysis. Residues 102–342 (QGGRGTLCVS…VRTTRGEDID (241 aa)) enclose the Radical SAM core domain. Cysteines 109 and 345 form a disulfide. Residues Cys-116, Cys-120, and Cys-123 each contribute to the [4Fe-4S] cluster site. Residues 170 to 171 (GE), Ser-202, 224 to 226 (SLH), and Asn-302 contribute to the S-adenosyl-L-methionine site. The active-site S-methylcysteine intermediate is the Cys-345.

Belongs to the radical SAM superfamily. RlmN family. It depends on [4Fe-4S] cluster as a cofactor.

It localises to the cytoplasm. It carries out the reaction adenosine(2503) in 23S rRNA + 2 reduced [2Fe-2S]-[ferredoxin] + 2 S-adenosyl-L-methionine = 2-methyladenosine(2503) in 23S rRNA + 5'-deoxyadenosine + L-methionine + 2 oxidized [2Fe-2S]-[ferredoxin] + S-adenosyl-L-homocysteine. The catalysed reaction is adenosine(37) in tRNA + 2 reduced [2Fe-2S]-[ferredoxin] + 2 S-adenosyl-L-methionine = 2-methyladenosine(37) in tRNA + 5'-deoxyadenosine + L-methionine + 2 oxidized [2Fe-2S]-[ferredoxin] + S-adenosyl-L-homocysteine. Functionally, specifically methylates position 2 of adenine 2503 in 23S rRNA and position 2 of adenine 37 in tRNAs. m2A2503 modification seems to play a crucial role in the proofreading step occurring at the peptidyl transferase center and thus would serve to optimize ribosomal fidelity. This is Dual-specificity RNA methyltransferase RlmN from Stutzerimonas stutzeri (strain A1501) (Pseudomonas stutzeri).